A 449-amino-acid polypeptide reads, in one-letter code: Chromosomal replication initiator protein DnaA (449 aa).

Positions 1–69 (MEKVWLEAQS…VEAISSLTSV (69 aa)) are domain I, interacts with DnaA modulators. The segment at 69 to 112 (VKYQIEFKITEKIPLESKPVDNFTPVIKDNEPSKETNKNIDITA) is domain II. The segment at 113–329 (NLNPKYTFDS…GMLIRLGAYA (217 aa)) is domain III, AAA+ region. Gly157, Gly159, Lys160, and Thr161 together coordinate ATP. The segment at 330-449 (SLTGSEITLN…VENLKKELIT (120 aa)) is domain IV, binds dsDNA.

This sequence belongs to the DnaA family. As to quaternary structure, oligomerizes as a right-handed, spiral filament on DNA at oriC.

The protein resides in the cytoplasm. Functionally, plays an essential role in the initiation and regulation of chromosomal replication. ATP-DnaA binds to the origin of replication (oriC) to initiate formation of the DNA replication initiation complex once per cell cycle. Binds the DnaA box (a 9 base pair repeat at the origin) and separates the double-stranded (ds)DNA. Forms a right-handed helical filament on oriC DNA; dsDNA binds to the exterior of the filament while single-stranded (ss)DNA is stabiized in the filament's interior. The ATP-DnaA-oriC complex binds and stabilizes one strand of the AT-rich DNA unwinding element (DUE), permitting loading of DNA polymerase. After initiation quickly degrades to an ADP-DnaA complex that is not apt for DNA replication. Binds acidic phospholipids. The sequence is that of Chromosomal replication initiator protein DnaA from Geotalea uraniireducens (strain Rf4) (Geobacter uraniireducens).